A 280-amino-acid chain; its full sequence is Large ribosomal subunit protein uL2 (280 aa).

The segment at 223 to 280 is disordered; that stretch reads VVMNPVDHPHGGGEGRTSGGRHPVTPWGKPTKGARTRNKNKASSKLIIRSRHAKKKGR. The segment covering 254–280 has biased composition (basic residues); it reads KGARTRNKNKASSKLIIRSRHAKKKGR.

This sequence belongs to the universal ribosomal protein uL2 family. In terms of assembly, part of the 50S ribosomal subunit. Forms a bridge to the 30S subunit in the 70S ribosome.

In terms of biological role, one of the primary rRNA binding proteins. Required for association of the 30S and 50S subunits to form the 70S ribosome, for tRNA binding and peptide bond formation. It has been suggested to have peptidyltransferase activity; this is somewhat controversial. Makes several contacts with the 16S rRNA in the 70S ribosome. The chain is Large ribosomal subunit protein uL2 from Dinoroseobacter shibae (strain DSM 16493 / NCIMB 14021 / DFL 12).